A 1645-amino-acid chain; its full sequence is Thrombospondin type-1 domain-containing protein 7A (1645 aa).

Residues 1-38 (MGLRAGRLASPSRGVLQLLRLPLLLLLLLSSGARGAAA) form the signal peptide. At 39–1595 (QGDTEVPTLY…FGPDGRLKTW (1557 aa)) the chain is on the extracellular side. 3 TSP type-1 domains span residues 46 to 105 (TLYL…KVCD), 109 to 181 (ELYD…IPCQ), and 183 to 236 (DCIV…NPCE). A glycan (N-linked (GlcNAc...) asparagine) is linked at asparagine 223. Positions 255–300 (PHTRQARQARRRGKNKEREKERGKAVKDPEARELIKKKRNRNRQNR) are disordered. Residues 256–304 (HTRQARQARRRGKNKEREKERGKAVKDPEARELIKKKRNRNRQNRQENR) are a coiled coil. Positions 258-269 (RQARQARRRGKN) are enriched in basic residues. A compositionally biased stretch (basic and acidic residues) spans 270 to 288 (KEREKERGKAVKDPEAREL). The segment covering 289–298 (IKKKRNRNRQ) has biased composition (basic residues). A glycan (N-linked (GlcNAc...) asparagine) is linked at asparagine 321. TSP type-1 domains are found at residues 349-405 (ECQV…VSQG), 412-499 (ATYG…VPCP), 501-563 (ECEV…PSCY), 623-684 (DCVL…HPCT), 685-758 (VYHW…LPCR), 760-820 (DCVV…PTCH), 821-893 (SYRW…IPCQ), 895-948 (DCQF…CPCD), 949-1022 (KYNA…IPCP), 1024-1084 (DCKL…SDCN), 1085-1152 (QYIW…LPCP), 1154-1208 (DCVI…KNCY), 1209-1272 (HYDY…VECP), 1274-1329 (NCQL…KPCY), 1330-1400 (RWQY…QPCP), and 1402-1463 (DCYL…GQCY). Cystine bridges form between cysteine 424-cysteine 494, cysteine 444-cysteine 498, and cysteine 455-cysteine 483. Residue asparagine 439 is glycosylated (N-linked (GlcNAc...) asparagine). Asparagine 489 carries an N-linked (GlcNAc...) asparagine glycan. 2 disulfide bridges follow: cysteine 624-cysteine 666 and cysteine 635-cysteine 639. N-linked (GlcNAc...) asparagine glycosylation is present at asparagine 668. 7 disulfide bridges follow: cysteine 678/cysteine 683, cysteine 696/cysteine 753, cysteine 717/cysteine 757, cysteine 728/cysteine 741, cysteine 761/cysteine 803, cysteine 772/cysteine 776, and cysteine 813/cysteine 819. Asparagine 706 carries N-linked (GlcNAc...) asparagine glycosylation. N-linked (GlcNAc...) asparagine glycosylation is present at asparagine 957. 6 cysteine pairs are disulfide-bonded: cysteine 961-cysteine 1017, cysteine 983-cysteine 1021, cysteine 994-cysteine 1007, cysteine 1025-cysteine 1062, cysteine 1036-cysteine 1040, and cysteine 1079-cysteine 1083. Residue asparagine 1032 is glycosylated (N-linked (GlcNAc...) asparagine). Cysteine 1201 and cysteine 1207 are disulfide-bonded. N-linked (GlcNAc...) asparagine glycosylation occurs at asparagine 1213. Intrachain disulfides connect cysteine 1220–cysteine 1267, cysteine 1228–cysteine 1271, cysteine 1239–cysteine 1252, cysteine 1275–cysteine 1313, cysteine 1286–cysteine 1290, cysteine 1323–cysteine 1328, cysteine 1339–cysteine 1395, cysteine 1346–cysteine 1399, cysteine 1357–cysteine 1376, cysteine 1403–cysteine 1447, cysteine 1414–cysteine 1418, and cysteine 1457–cysteine 1462. N-linked (GlcNAc...) asparagine glycosylation is present at asparagine 1264. Residue asparagine 1354 is glycosylated (N-linked (GlcNAc...) asparagine). N-linked (GlcNAc...) asparagine glycans are attached at residues asparagine 1488 and asparagine 1535. Residues 1596–1616 (VYGVAAGAFVLLVFIVSMIYL) traverse the membrane as a helical segment. Topologically, residues 1617-1645 (ACKKPKKPQRRQNNRLKPLTLAYDGDADM) are cytoplasmic.

Proteolytic cleavage in the extracellular region generates a 210 kDa soluble form. In terms of processing, extensively N-glycosylated. Detected on kidney podocytes along the glomerular capillary wall (at protein level).

It is found in the cell membrane. The protein resides in the cell projection. Its subcellular location is the secreted. In terms of biological role, plays a role in actin cytoskeleton rearrangement. Functionally, the soluble form promotes endothelial cell migration and filopodia formation during sprouting angiogenesis via a FAK-dependent mechanism. In Mus musculus (Mouse), this protein is Thrombospondin type-1 domain-containing protein 7A (Thsd7a).